An 805-amino-acid chain; its full sequence is Putative cation-transporting ATPase MJ1226 (805 aa).

4 helical membrane-spanning segments follow: residues 53–73 (SYFW…SAII), 75–95 (HWVD…VGFW), 226–246 (IGDY…AVEL), and 258–278 (FALV…LSIT). Catalysis depends on Asp311, which acts as the 4-aspartylphosphate intermediate. 6 consecutive transmembrane segments (helical) span residues 615-637 (YVIY…ILIL), 641-663 (PITA…AIAY), 680-700 (ILML…LIFY), 712-734 (ELQS…VTRI), 747-769 (LLFW…GIFM), and 773-790 (GWDL…WMLI).

This sequence belongs to the cation transport ATPase (P-type) (TC 3.A.3) family. Type IIIA subfamily.

It localises to the cell membrane. The catalysed reaction is ATP + H2O = ADP + phosphate + H(+). In Methanocaldococcus jannaschii (strain ATCC 43067 / DSM 2661 / JAL-1 / JCM 10045 / NBRC 100440) (Methanococcus jannaschii), this protein is Putative cation-transporting ATPase MJ1226.